The following is a 151-amino-acid chain: Ribosome-binding factor A (151 aa).

The disordered stretch occupies residues 116 to 151; it reads DAEVARAAANARPAGDPDPYREPRPADDDDEDDEDE. Residues 120–129 are compositionally biased toward low complexity; the sequence is ARAAANARPA. Residues 142–151 are compositionally biased toward acidic residues; sequence DDDDEDDEDE.

This sequence belongs to the RbfA family. In terms of assembly, monomer. Binds 30S ribosomal subunits, but not 50S ribosomal subunits or 70S ribosomes.

Its subcellular location is the cytoplasm. One of several proteins that assist in the late maturation steps of the functional core of the 30S ribosomal subunit. Associates with free 30S ribosomal subunits (but not with 30S subunits that are part of 70S ribosomes or polysomes). Required for efficient processing of 16S rRNA. May interact with the 5'-terminal helix region of 16S rRNA. This is Ribosome-binding factor A from Thermobifida fusca (strain YX).